Consider the following 126-residue polypeptide: Histone H2B type 1-N (126 aa).

Positions 1–12 (MPEPSKSAPAPK) are enriched in low complexity. The tract at residues 1-36 (MPEPSKSAPAPKKGSKKAVTKAQKKDGKKRKRSRKE) is disordered. Position 2 is an N-acetylproline (Pro-2). Glu-3 is modified (ADP-ribosyl glutamic acid). N6-(2-hydroxyisobutyryl)lysine; alternate is present on Lys-6. Lys-6 is modified (N6-(beta-hydroxybutyryl)lysine; alternate). Lys-6 bears the N6-acetyllysine; alternate mark. An N6-butyryllysine; alternate modification is found at Lys-6. At Lys-6 the chain carries N6-crotonyllysine; alternate. Residue Lys-6 is modified to N6-lactoyllysine; alternate. Lys-6 participates in a covalent cross-link: Glycyl lysine isopeptide (Lys-Gly) (interchain with G-Cter in SUMO2); alternate. The residue at position 7 (Ser-7) is an ADP-ribosylserine. Lys-12 carries the post-translational modification N6-(beta-hydroxybutyryl)lysine; alternate. N6-acetyllysine; alternate is present on residues Lys-12 and Lys-13. 2 positions are modified to N6-crotonyllysine; alternate: Lys-12 and Lys-13. Position 12 is an N6-lactoyllysine; alternate (Lys-12). The residue at position 13 (Lys-13) is an N6-(2-hydroxyisobutyryl)lysine; alternate. At Ser-15 the chain carries Phosphoserine; by STK4/MST1. N6-acetyllysine; alternate occurs at positions 16, 17, 21, and 24. An N6-crotonyllysine; alternate mark is found at Lys-16, Lys-17, Lys-21, and Lys-24. N6-lactoyllysine; alternate occurs at positions 16, 17, 21, and 24. N6-(beta-hydroxybutyryl)lysine; alternate is present on residues Lys-17 and Lys-21. Lys-17 carries the N6-glutaryllysine; alternate modification. 2 positions are modified to N6-(2-hydroxyisobutyryl)lysine; alternate: Lys-21 and Lys-24. At Lys-21 the chain carries N6-butyryllysine; alternate. Residue Lys-21 forms a Glycyl lysine isopeptide (Lys-Gly) (interchain with G-Cter in SUMO2); alternate linkage. Lys-25 carries the post-translational modification N6-(2-hydroxyisobutyryl)lysine. Residue Lys-35 is modified to N6-(2-hydroxyisobutyryl)lysine; alternate. The residue at position 35 (Lys-35) is an N6-(beta-hydroxybutyryl)lysine; alternate. Lys-35 carries the post-translational modification N6-crotonyllysine; alternate. An N6-glutaryllysine; alternate modification is found at Lys-35. Lys-35 carries the post-translational modification N6-succinyllysine; alternate. Lys-35 is covalently cross-linked (Glycyl lysine isopeptide (Lys-Gly) (interchain with G-Cter in ubiquitin); alternate). Residue Glu-36 is modified to PolyADP-ribosyl glutamic acid. Position 37 is a phosphoserine; by AMPK (Ser-37). 3 positions are modified to N6-(2-hydroxyisobutyryl)lysine; alternate: Lys-44, Lys-47, and Lys-58. Lys-44 is modified (N6-lactoyllysine; alternate). An N6-glutaryllysine; alternate mark is found at Lys-44 and Lys-47. The residue at position 47 (Lys-47) is an N6-methyllysine; alternate. Position 58 is an N6,N6-dimethyllysine; alternate (Lys-58). Dimethylated arginine is present on Arg-80. Lys-86 carries the N6-(2-hydroxyisobutyryl)lysine; alternate modification. Lys-86 bears the N6-(beta-hydroxybutyryl)lysine; alternate mark. The residue at position 86 (Lys-86) is an N6-acetyllysine; alternate. Lys-86 carries the post-translational modification N6-lactoyllysine; alternate. The residue at position 86 (Lys-86) is an N6,N6,N6-trimethyllysine; alternate. Omega-N-methylarginine is present on residues Arg-87 and Arg-93. N6-(2-hydroxyisobutyryl)lysine; alternate is present on Lys-109. An N6-lactoyllysine; alternate modification is found at Lys-109. N6-glutaryllysine; alternate is present on Lys-109. Lys-109 is modified (N6-methyllysine; alternate). Residue Ser-113 is glycosylated (O-linked (GlcNAc) serine). At Thr-116 the chain carries Phosphothreonine. 2 positions are modified to N6-(2-hydroxyisobutyryl)lysine; alternate: Lys-117 and Lys-121. Residues Lys-117 and Lys-121 each carry the N6-(beta-hydroxybutyryl)lysine; alternate modification. An N6-lactoyllysine; alternate mark is found at Lys-117 and Lys-121. Residues Lys-117 and Lys-121 each carry the N6-glutaryllysine; alternate modification. Residues Lys-117 and Lys-121 each carry the N6-succinyllysine; alternate modification. The residue at position 117 (Lys-117) is an N6-malonyllysine; alternate. Lys-117 is subject to N6-methylated lysine; alternate. A Glycyl lysine isopeptide (Lys-Gly) (interchain with G-Cter in ubiquitin); alternate cross-link involves residue Lys-121.

It belongs to the histone H2B family. The nucleosome is a histone octamer containing two molecules each of H2A, H2B, H3 and H4 assembled in one H3-H4 heterotetramer and two H2A-H2B heterodimers. The octamer wraps approximately 147 bp of DNA. Post-translationally, monoubiquitination at Lys-35 (H2BK34Ub) by the MSL1/MSL2 dimer is required for histone H3 'Lys-4' (H3K4me) and 'Lys-79' (H3K79me) methylation and transcription activation at specific gene loci, such as HOXA9 and MEIS1 loci. Similarly, monoubiquitination at Lys-121 (H2BK120Ub) by the RNF20/40 complex gives a specific tag for epigenetic transcriptional activation and is also prerequisite for histone H3 'Lys-4' and 'Lys-79' methylation. It also functions cooperatively with the FACT dimer to stimulate elongation by RNA polymerase II. H2BK120Ub also acts as a regulator of mRNA splicing: deubiquitination by USP49 is required for efficient cotranscriptional splicing of a large set of exons. Phosphorylation at Ser-37 (H2BS36ph) by AMPK in response to stress promotes transcription. Phosphorylated on Ser-15 (H2BS14ph) by STK4/MST1 during apoptosis; which facilitates apoptotic chromatin condensation. Also phosphorylated on Ser-15 in response to DNA double strand breaks (DSBs), and in correlation with somatic hypermutation and immunoglobulin class-switch recombination. In terms of processing, glcNAcylation at Ser-113 promotes monoubiquitination of Lys-121. It fluctuates in response to extracellular glucose, and associates with transcribed genes. Post-translationally, ADP-ribosylated by PARP1 or PARP2 on Ser-7 (H2BS6ADPr) in response to DNA damage. H2BS6ADPr promotes recruitment of CHD1L. Mono-ADP-ribosylated on Glu-3 (H2BE2ADPr) by PARP3 in response to single-strand breaks. Poly ADP-ribosylation on Glu-36 (H2BE35ADPr) by PARP1 regulates adipogenesis: it inhibits phosphorylation at Ser-37 (H2BS36ph), thereby blocking expression of pro-adipogenetic genes. Crotonylation (Kcr) is specifically present in male germ cells and marks testis-specific genes in post-meiotic cells, including X-linked genes that escape sex chromosome inactivation in haploid cells. Crotonylation marks active promoters and enhancers and confers resistance to transcriptional repressors. It is also associated with post-meiotically activated genes on autosomes. In terms of processing, lactylated in macrophages by EP300/P300 by using lactoyl-CoA directly derived from endogenous or exogenous lactate, leading to stimulates gene transcription.

It localises to the nucleus. The protein resides in the chromosome. In terms of biological role, core component of nucleosome. Nucleosomes wrap and compact DNA into chromatin, limiting DNA accessibility to the cellular machineries which require DNA as a template. Histones thereby play a central role in transcription regulation, DNA repair, DNA replication and chromosomal stability. DNA accessibility is regulated via a complex set of post-translational modifications of histones, also called histone code, and nucleosome remodeling. The protein is Histone H2B type 1-N of Homo sapiens (Human).